A 484-amino-acid chain; its full sequence is tRNA sulfurtransferase (484 aa).

Residues 63–167 (ANLILLLSST…NEKLFFIDKK (105 aa)) enclose the THUMP domain. Residues 185-186 (LI), Lys-267, Gly-289, and Gln-298 each bind ATP. A disulfide bridge links Cys-346 with Cys-458. In terms of domain architecture, Rhodanese spans 406–484 (FAENEIVLDI…GFDNVKVYRP (79 aa)). Cys-458 functions as the Cysteine persulfide intermediate in the catalytic mechanism.

Belongs to the ThiI family.

It localises to the cytoplasm. It catalyses the reaction [ThiI sulfur-carrier protein]-S-sulfanyl-L-cysteine + a uridine in tRNA + 2 reduced [2Fe-2S]-[ferredoxin] + ATP + H(+) = [ThiI sulfur-carrier protein]-L-cysteine + a 4-thiouridine in tRNA + 2 oxidized [2Fe-2S]-[ferredoxin] + AMP + diphosphate. The catalysed reaction is [ThiS sulfur-carrier protein]-C-terminal Gly-Gly-AMP + S-sulfanyl-L-cysteinyl-[cysteine desulfurase] + AH2 = [ThiS sulfur-carrier protein]-C-terminal-Gly-aminoethanethioate + L-cysteinyl-[cysteine desulfurase] + A + AMP + 2 H(+). Its pathway is cofactor biosynthesis; thiamine diphosphate biosynthesis. Functionally, catalyzes the ATP-dependent transfer of a sulfur to tRNA to produce 4-thiouridine in position 8 of tRNAs, which functions as a near-UV photosensor. Also catalyzes the transfer of sulfur to the sulfur carrier protein ThiS, forming ThiS-thiocarboxylate. This is a step in the synthesis of thiazole, in the thiamine biosynthesis pathway. The sulfur is donated as persulfide by IscS. In Psychromonas ingrahamii (strain DSM 17664 / CCUG 51855 / 37), this protein is tRNA sulfurtransferase.